Consider the following 371-residue polypeptide: Cytochrome b (371 aa).

Helical transmembrane passes span 25 to 45 (FGSMLLTCLALQVLTGFFLAV), 69 to 90 (WMMQNLHAIGASMFFICIYIHI), 105 to 125 (WMSGITLLITLMATAFFGYVL), and 170 to 190 (FFALHFILPFAIISLSSLHVI). His75 and His89 together coordinate heme b. Residues His174 and His188 each contribute to the heme b site. His193 is a binding site for a ubiquinone. The next 4 helical transmembrane spans lie at 218-238 (YKDFLLLTLMVLSLFIIVSFF), 280-300 (LGGALALVMSIMILFTIPFTH), 312-332 (LYQLMFWTLVSTFITITWAAT), and 339-358 (FITISQVTSTLYFTFFISIP).

Belongs to the cytochrome b family. The cytochrome bc1 complex contains 3 respiratory subunits (MT-CYB, CYC1 and UQCRFS1), 2 core proteins (UQCRC1 and UQCRC2) and probably 6 low-molecular weight proteins. Heme b is required as a cofactor.

Its subcellular location is the mitochondrion inner membrane. Functionally, component of the ubiquinol-cytochrome c reductase complex (complex III or cytochrome b-c1 complex) that is part of the mitochondrial respiratory chain. The b-c1 complex mediates electron transfer from ubiquinol to cytochrome c. Contributes to the generation of a proton gradient across the mitochondrial membrane that is then used for ATP synthesis. This chain is Cytochrome b (MT-CYB), found in Malayopython reticulatus (Reticulate python).